A 108-amino-acid chain; its full sequence is Large ribosomal subunit protein uL24 (108 aa).

This sequence belongs to the universal ribosomal protein uL24 family. In terms of assembly, part of the 50S ribosomal subunit.

Functionally, one of two assembly initiator proteins, it binds directly to the 5'-end of the 23S rRNA, where it nucleates assembly of the 50S subunit. Its function is as follows. One of the proteins that surrounds the polypeptide exit tunnel on the outside of the subunit. The chain is Large ribosomal subunit protein uL24 from Citrifermentans bemidjiense (strain ATCC BAA-1014 / DSM 16622 / JCM 12645 / Bem) (Geobacter bemidjiensis).